We begin with the raw amino-acid sequence, 206 residues long: Small ribosomal subunit protein uS4 (206 aa).

A disordered region spans residues 28–48; it reads YMERRPYGPGEHGRARKKQDS. The 66-residue stretch at 95–160 folds into the S4 RNA-binding domain; that stretch reads MRLDALVLRA…MPPFQVAAAG (66 aa).

It belongs to the universal ribosomal protein uS4 family. In terms of assembly, part of the 30S ribosomal subunit. Contacts protein S5. The interaction surface between S4 and S5 is involved in control of translational fidelity.

Functionally, one of the primary rRNA binding proteins, it binds directly to 16S rRNA where it nucleates assembly of the body of the 30S subunit. With S5 and S12 plays an important role in translational accuracy. The polypeptide is Small ribosomal subunit protein uS4 (Paenarthrobacter aurescens (strain TC1)).